Consider the following 369-residue polypeptide: Delta(12)-oleate desaturase (369 aa).

The next 2 helical transmembrane spans lie at 41–61 (LLSDLAFVSLFFYLAIAYFPL) and 69–89 (IAWPLYWIFQGCSLTGVWVIA). The Histidine box-1 signature appears at 90–94 (HECGH). The chain crosses the membrane as a helical span at residues 102–122 (LIDDIVGLFFHSALLVPYFSW). Residues 126–130 (HRRHH) carry the Histidine box-2 motif. The next 3 membrane-spanning stretches (helical) occupy residues 164–184 (LISLIGTLTLGWPLYLAFNMS), 207–227 (WIQVYISDAGILGMAFMLYRI), and 234–254 (FWVMRIYGIPLVIVNGFLVLI). A Histidine box-3 motif is present at residues 300–304 (HVVHH).

It belongs to the fatty acid desaturase type 1 family.

Its subcellular location is the membrane. It participates in lipid metabolism; polyunsaturated fatty acid biosynthesis. In terms of biological role, delta(12)-fatty acid desaturase producing in a heterologous system linoleic acid (18:2(9Z,12Z)) and to a lower extent hexadecadienoic acid (16:2(9Z,12Z)). The polypeptide is Delta(12)-oleate desaturase (Trichosanthes kirilowii (Chinese snake gourd)).